Consider the following 332-residue polypeptide: Fructose-1,6-bisphosphatase class 1 (332 aa).

4 residues coordinate Mg(2+): Glu89, Asp110, Leu112, and Asp113. Substrate contacts are provided by residues 113–116 (DGSS), Asn206, Tyr239, 257–259 (YLY), and Lys269. Glu275 contacts Mg(2+).

Belongs to the FBPase class 1 family. As to quaternary structure, homotetramer. Mg(2+) serves as cofactor.

It localises to the cytoplasm. The enzyme catalyses beta-D-fructose 1,6-bisphosphate + H2O = beta-D-fructose 6-phosphate + phosphate. Its pathway is carbohydrate biosynthesis; gluconeogenesis. This is Fructose-1,6-bisphosphatase class 1 from Salmonella typhi.